Consider the following 467-residue polypeptide: Chromosomal replication initiator protein DnaA (467 aa).

The interval 1-90 (MSLSLWQQCL…KSVTQTPQAA (90 aa)) is domain I, interacts with DnaA modulators. The segment at 91–130 (VTSNVAAPAQVAQTQPQRAAPSTRSGWDNVPAPAEPTYRS) is domain II. The segment covering 97 to 111 (APAQVAQTQPQRAAP) has biased composition (low complexity). The tract at residues 97-119 (APAQVAQTQPQRAAPSTRSGWDN) is disordered. The domain III, AAA+ region stretch occupies residues 131-347 (NVNVKHTFDN…GALNRVIANA (217 aa)). The ATP site is built by G175, G177, K178, and T179. Residues 348–467 (NFTGRAITID…FSNLIRTLSS (120 aa)) are domain IV, binds dsDNA.

The protein belongs to the DnaA family. In terms of assembly, oligomerizes as a right-handed, spiral filament on DNA at oriC.

The protein localises to the cytoplasm. Its function is as follows. Plays an essential role in the initiation and regulation of chromosomal replication. ATP-DnaA binds to the origin of replication (oriC) to initiate formation of the DNA replication initiation complex once per cell cycle. Binds the DnaA box (a 9 base pair repeat at the origin) and separates the double-stranded (ds)DNA. Forms a right-handed helical filament on oriC DNA; dsDNA binds to the exterior of the filament while single-stranded (ss)DNA is stabiized in the filament's interior. The ATP-DnaA-oriC complex binds and stabilizes one strand of the AT-rich DNA unwinding element (DUE), permitting loading of DNA polymerase. After initiation quickly degrades to an ADP-DnaA complex that is not apt for DNA replication. Binds acidic phospholipids. The polypeptide is Chromosomal replication initiator protein DnaA (Escherichia coli O157:H7).